A 246-amino-acid polypeptide reads, in one-letter code: Sensory transduction protein LytT (246 aa).

A Response regulatory domain is found at 3–117; it reads KVLVVDDEML…RIVQTLKKYK (115 aa). The HTH LytTR-type domain occupies 142–246; that stretch reads LALPIEESIV…AKELKKLLRI (105 aa).

In terms of processing, phosphorylated by LytS.

It localises to the cytoplasm. Functionally, member of the two-component regulatory system LytS/LytT that probably regulates genes involved in cell wall metabolism. This chain is Sensory transduction protein LytT (lytT), found in Bacillus cereus (strain ATCC 14579 / DSM 31 / CCUG 7414 / JCM 2152 / NBRC 15305 / NCIMB 9373 / NCTC 2599 / NRRL B-3711).